A 139-amino-acid polypeptide reads, in one-letter code: Cystatin-11 (139 aa).

An N-terminal signal peptide occupies residues 1–28 (MMARLWKTTWFLLAILVALVAFSYQVKR). Intrachain disulfides connect Cys94–Cys102 and Cys115–Cys135. A glycan (N-linked (GlcNAc...) asparagine) is linked at Asn134.

Belongs to the cystatin family.

It is found in the secreted. In terms of biological role, has antibacterial activity against the Gram-negative bacteria E.coli. May play a role in sperm maturation and fertilization. The protein is Cystatin-11 (Cst11) of Rattus norvegicus (Rat).